The chain runs to 256 residues: Proteasome subunit alpha (256 aa).

The tract at residues 235–256 (ELDSNGSDGNGDAPELNGGSSD) is disordered.

The protein belongs to the peptidase T1A family. As to quaternary structure, the 20S proteasome core is composed of 14 alpha and 14 beta subunits that assemble into four stacked heptameric rings, resulting in a barrel-shaped structure. The two inner rings, each composed of seven catalytic beta subunits, are sandwiched by two outer rings, each composed of seven alpha subunits. The catalytic chamber with the active sites is on the inside of the barrel. Has a gated structure, the ends of the cylinder being occluded by the N-termini of the alpha-subunits. Is capped by the proteasome-associated ATPase, ARC.

It localises to the cytoplasm. Its pathway is protein degradation; proteasomal Pup-dependent pathway. Its activity is regulated as follows. The formation of the proteasomal ATPase ARC-20S proteasome complex, likely via the docking of the C-termini of ARC into the intersubunit pockets in the alpha-rings, may trigger opening of the gate for substrate entry. Interconversion between the open-gate and close-gate conformations leads to a dynamic regulation of the 20S proteasome proteolysis activity. Its function is as follows. Component of the proteasome core, a large protease complex with broad specificity involved in protein degradation. The sequence is that of Proteasome subunit alpha from Mycolicibacterium paratuberculosis (strain ATCC BAA-968 / K-10) (Mycobacterium paratuberculosis).